A 297-amino-acid chain; its full sequence is Acetylglutamate kinase (297 aa).

Residues 68–69 (GG), R90, and N195 each bind substrate.

The protein belongs to the acetylglutamate kinase family. ArgB subfamily.

Its subcellular location is the cytoplasm. It catalyses the reaction N-acetyl-L-glutamate + ATP = N-acetyl-L-glutamyl 5-phosphate + ADP. It functions in the pathway amino-acid biosynthesis; L-arginine biosynthesis; N(2)-acetyl-L-ornithine from L-glutamate: step 2/4. In terms of biological role, catalyzes the ATP-dependent phosphorylation of N-acetyl-L-glutamate. The protein is Acetylglutamate kinase of Chelativorans sp. (strain BNC1).